A 386-amino-acid polypeptide reads, in one-letter code: Flap endonuclease 1 (386 aa).

The N-domain stretch occupies residues 1 to 104 (MGILGLSKLI…GELAKRAERR (104 aa)). Residue D34 participates in Mg(2+) binding. DNA-binding residues include R47 and R70. 5 residues coordinate Mg(2+): D86, E158, E160, D179, and D181. The interval 122 to 253 (EIEKFNRRLV…KRAIELINNY (132 aa)) is I-domain. E158 contributes to the DNA binding site. 2 residues coordinate DNA: G231 and D233. D233 contributes to the Mg(2+) binding site. The interval 336–344 (TQVRLDSFF) is interaction with PCNA. Residues 354–386 (VNAAKRKAEEAKKSANNKKAKTSGGAARGRRPK) are disordered.

Belongs to the XPG/RAD2 endonuclease family. FEN1 subfamily. In terms of assembly, interacts with PCNA. Three molecules of FEN1 bind to one PCNA trimer with each molecule binding to one PCNA monomer. PCNA stimulates the nuclease activity without altering cleavage specificity. The cofactor is Mg(2+). Phosphorylated. Phosphorylation upon DNA damage induces relocalization to the nuclear plasma.

Its subcellular location is the nucleus. It is found in the nucleolus. The protein localises to the nucleoplasm. It localises to the mitochondrion. Functionally, structure-specific nuclease with 5'-flap endonuclease and 5'-3' exonuclease activities involved in DNA replication and repair. During DNA replication, cleaves the 5'-overhanging flap structure that is generated by displacement synthesis when DNA polymerase encounters the 5'-end of a downstream Okazaki fragment. It enters the flap from the 5'-end and then tracks to cleave the flap base, leaving a nick for ligation. Also involved in the long patch base excision repair (LP-BER) pathway, by cleaving within the apurinic/apyrimidinic (AP) site-terminated flap. Acts as a genome stabilization factor that prevents flaps from equilibrating into structures that lead to duplications and deletions. Also possesses 5'-3' exonuclease activity on nicked or gapped double-stranded DNA, and exhibits RNase H activity. Also involved in replication and repair of rDNA and in repairing mitochondrial DNA. The sequence is that of Flap endonuclease 1 from Drosophila pseudoobscura pseudoobscura (Fruit fly).